Here is a 352-residue protein sequence, read N- to C-terminus: RNA 3'-terminal phosphate cyclase (352 aa).

ATP-binding positions include Q102 and 292 to 296 (HMGDQ). The Tele-AMP-histidine intermediate role is filled by H318.

It belongs to the RNA 3'-terminal cyclase family. Type 1 subfamily.

Its subcellular location is the cytoplasm. The catalysed reaction is a 3'-end 3'-phospho-ribonucleotide-RNA + ATP = a 3'-end 2',3'-cyclophospho-ribonucleotide-RNA + AMP + diphosphate. Functionally, catalyzes the conversion of 3'-phosphate to a 2',3'-cyclic phosphodiester at the end of RNA. The mechanism of action of the enzyme occurs in 3 steps: (A) adenylation of the enzyme by ATP; (B) transfer of adenylate to an RNA-N3'P to produce RNA-N3'PP5'A; (C) and attack of the adjacent 2'-hydroxyl on the 3'-phosphorus in the diester linkage to produce the cyclic end product. The biological role of this enzyme is unknown but it is likely to function in some aspects of cellular RNA processing. The polypeptide is RNA 3'-terminal phosphate cyclase (Methanopyrus kandleri (strain AV19 / DSM 6324 / JCM 9639 / NBRC 100938)).